The chain runs to 255 residues: Indole-3-glycerol phosphate synthase (255 aa).

Belongs to the TrpC family.

It carries out the reaction 1-(2-carboxyphenylamino)-1-deoxy-D-ribulose 5-phosphate + H(+) = (1S,2R)-1-C-(indol-3-yl)glycerol 3-phosphate + CO2 + H2O. It functions in the pathway amino-acid biosynthesis; L-tryptophan biosynthesis; L-tryptophan from chorismate: step 4/5. The chain is Indole-3-glycerol phosphate synthase from Streptococcus thermophilus (strain ATCC BAA-250 / LMG 18311).